We begin with the raw amino-acid sequence, 412 residues long: Peptidase T (412 aa).

His-84 contributes to the Zn(2+) binding site. The active site involves Asp-86. Position 146 (Asp-146) interacts with Zn(2+). Catalysis depends on Glu-179, which acts as the Proton acceptor. Residues Glu-180, Asp-202, and His-385 each contribute to the Zn(2+) site.

Belongs to the peptidase M20B family. Requires Zn(2+) as cofactor.

The protein resides in the cytoplasm. It catalyses the reaction Release of the N-terminal residue from a tripeptide.. Its function is as follows. Cleaves the N-terminal amino acid of tripeptides. This chain is Peptidase T, found in Haemophilus influenzae (strain ATCC 51907 / DSM 11121 / KW20 / Rd).